An 856-amino-acid polypeptide reads, in one-letter code: DNA mismatch repair protein MutS (856 aa).

618–625 (GPNMGGKS) contacts ATP.

The protein belongs to the DNA mismatch repair MutS family.

Its function is as follows. This protein is involved in the repair of mismatches in DNA. It is possible that it carries out the mismatch recognition step. This protein has a weak ATPase activity. In Shewanella baltica (strain OS185), this protein is DNA mismatch repair protein MutS.